The following is a 102-amino-acid chain: Protein S100-A11 (102 aa).

At serine 2 the chain carries Phosphoserine. Threonine 7 carries the phosphothreonine modification. 2 consecutive EF-hand domains span residues glutamate 12 to phenylalanine 47 and lysine 52 to alanine 87. At lysine 24 the chain carries N6-acetyllysine. Serine 28, threonine 30, glutamate 35, aspartate 65, asparagine 67, aspartate 69, glutamine 71, and glutamate 76 together coordinate Ca(2+).

Belongs to the S-100 family. Homodimer; disulfide-linked. Post-translationally, phosphorylation at Thr-7 significantly suppresses homodimerization and promotes association with NCL/nucleolin which induces nuclear translocation. Smooth muscle and non-muscle tissues.

The protein localises to the cytoplasm. It localises to the nucleus. Its function is as follows. Facilitates the differentiation and the cornification of keratinocytes. In Oryctolagus cuniculus (Rabbit), this protein is Protein S100-A11 (S100A11).